The primary structure comprises 869 residues: Alanine--tRNA ligase (869 aa).

Zn(2+) is bound by residues His-559, His-563, Cys-660, and His-664.

The protein belongs to the class-II aminoacyl-tRNA synthetase family. The cofactor is Zn(2+).

It localises to the cytoplasm. It catalyses the reaction tRNA(Ala) + L-alanine + ATP = L-alanyl-tRNA(Ala) + AMP + diphosphate. Catalyzes the attachment of alanine to tRNA(Ala) in a two-step reaction: alanine is first activated by ATP to form Ala-AMP and then transferred to the acceptor end of tRNA(Ala). Also edits incorrectly charged Ser-tRNA(Ala) and Gly-tRNA(Ala) via its editing domain. The polypeptide is Alanine--tRNA ligase (Herminiimonas arsenicoxydans).